Reading from the N-terminus, the 256-residue chain is Homeobox-leucine zipper protein HOX28 (256 aa).

Positions 56–86 (ACSPGSPVSSGSGKRGSGSGSGDEVDDAGCD) are disordered. Over residues 58–67 (SPGSPVSSGS) the composition is skewed to low complexity. The segment at residues 91 to 150 (GARKKLRLSKDQAAVLEECFKTHHTLTPKQKVALAKSLNLRPRQVEVWFQNRRARTKLKQ) is a DNA-binding region (homeobox). The interval 149–193 (KQTEVDCEHLKRWCDQLADDNRRLHKELAELRALKATPTPPAAAP) is leucine-zipper.

Belongs to the HD-ZIP homeobox family. Class II subfamily. Expressed in seedlings, roots, stems and panicles.

Its subcellular location is the nucleus. Functionally, probable transcription factor. In Oryza sativa subsp. indica (Rice), this protein is Homeobox-leucine zipper protein HOX28 (HOX28).